We begin with the raw amino-acid sequence, 560 residues long: Arginine--tRNA ligase (560 aa).

The 'HIGH' region motif lies at 135–145; sequence ANPTGLLHMGN.

Belongs to the class-I aminoacyl-tRNA synthetase family. In terms of assembly, monomer.

It localises to the cytoplasm. The enzyme catalyses tRNA(Arg) + L-arginine + ATP = L-arginyl-tRNA(Arg) + AMP + diphosphate. The sequence is that of Arginine--tRNA ligase from Moorella thermoacetica (strain ATCC 39073 / JCM 9320).